The sequence spans 228 residues: Sugar fermentation stimulation protein homolog (228 aa).

Belongs to the SfsA family.

In Desulfitobacterium hafniense (strain DSM 10664 / DCB-2), this protein is Sugar fermentation stimulation protein homolog.